Reading from the N-terminus, the 439-residue chain is Putative FBD-associated F-box protein At1g05080 (439 aa).

The 47-residue stretch at 12-58 (EDRISVLPEDLLVVILDLLPTKDVVATMILSKRWLSIWTMVRTLEYT) folds into the F-box domain. An FBD domain is found at 360-410 (SWKQPSHVPECLSSQLEIFEWRDYGDRIIEEEFLTYVLANSKRLKTATISL).

The sequence is that of Putative FBD-associated F-box protein At1g05080 from Arabidopsis thaliana (Mouse-ear cress).